A 121-amino-acid chain; its full sequence is MSAISPKIQNQIAMLQQVQQQMQTIMSQKTQYEMEIRENRRAEEELNDVPQESAVFMNVGTVMMQKPKEKVIASLQEKAESLELRVKSLEKQEKMMQAKFEQLQAQVKEALEGGNRPPNAA.

The protein belongs to the prefoldin subunit beta family. In terms of assembly, heterohexamer of two alpha and four beta subunits.

The protein resides in the cytoplasm. Functionally, molecular chaperone capable of stabilizing a range of proteins. Seems to fulfill an ATP-independent, HSP70-like function in archaeal de novo protein folding. The polypeptide is Prefoldin subunit beta (Methanosphaerula palustris (strain ATCC BAA-1556 / DSM 19958 / E1-9c)).